A 260-amino-acid polypeptide reads, in one-letter code: 33 kDa inner dynein arm light chain, axonemal (260 aa).

The segment at 1 to 66 (MIPPNASLVK…PVESQKAQQT (66 aa)) is disordered. The stretch at 177-260 (MRKALQAEQG…LEGIIAPNKK (84 aa)) forms a coiled coil.

The protein belongs to the inner dynein arm light chain family. In terms of processing, may undergo some post-translational modifications that shift its mobility on SDS gels.

Its function is as follows. May play a dynamic role in flagellar motility. This Strongylocentrotus purpuratus (Purple sea urchin) protein is 33 kDa inner dynein arm light chain, axonemal.